The primary structure comprises 886 residues: MTSQLIKKIVTGDEIRNAFLKFYSEKLHKIIPSASLIPDDPTVMLTIAGMLPFKPVFLGLKERPSKRATSSQKCIRTNDIENVGVTARHHTFFEMLGNFSFGDYFKREAIQWAWELVTNIYQLSVENIIVSVFHEDEESAKIWSDEIGIHPDRIVKLGEEDNFWSSGKTGPCGPCSELYYDFHPEKGLQNIDLEDGDRFIEFYNLVFMQYNRDPNGKLTDLKFKNIDTGMGLERMAQILQKKQNNYETDLIFPIIQKICEIANIDYFSSDDKNKISLKIIGDHTRAVIHLISDGVSASNLGRGYILRRLIRRMVRHGRLLGITNEFLPHIASVGINLMQNNYPDLKNNNDLILNEIKIEEIRFRETLERGEKLLDELISSGQKLISGFKAFELYDTYGFPLELTVEIAEEHSISVDVKGFEEEMNVQKERAKAASSNIDLTLEGSLEREIDVFNKTVFNGYKSLLSEAEIKGIFLDSTLVKEASEGQKVLIVLDQTTFYGESGGQVGDIGTIFSNDVEVLVDNVMRKKNVFLHYGTIKKGKLTIGQKVKTNVSSSNRAKAAANHTATHLLQSALKSVINESVGQKGSLVAFNKLRFDFNSSNPISKDQISKIETLVNSWIMENHSLEIKNMSKSEALEKGAVAMFGEKYDDEVRVVNVPGVSMELCGGTHVKTTSELGSFKIISEEGISAGVRRIEALSGQSALDYFSDRNALVNQLSDLLKANPNQLFERVNNLQAELINKNKEIQKMKDEIAYFKYSSIKSSAEIVNSFSILVNQIDGLDGNSLQSAALNLTSHLGNKAIVILGGIPNPENRKLLFVVSLGDDAVKIGLHAGKLINEIARICSGGGGGKPNFAQAGAKDIDKLSDALDYAKNYLQKTLASHSDK.

The Zn(2+) site is built by His-564, His-568, Cys-666, and His-670.

The protein belongs to the class-II aminoacyl-tRNA synthetase family. Zn(2+) serves as cofactor.

Its subcellular location is the cytoplasm. The catalysed reaction is tRNA(Ala) + L-alanine + ATP = L-alanyl-tRNA(Ala) + AMP + diphosphate. Its function is as follows. Catalyzes the attachment of alanine to tRNA(Ala) in a two-step reaction: alanine is first activated by ATP to form Ala-AMP and then transferred to the acceptor end of tRNA(Ala). Also edits incorrectly charged Ser-tRNA(Ala) and Gly-tRNA(Ala) via its editing domain. This chain is Alanine--tRNA ligase, found in Prochlorococcus marinus (strain AS9601).